We begin with the raw amino-acid sequence, 414 residues long: MANSC domain-containing protein 1 (414 aa).

Residues 1-24 form the signal peptide; sequence MLFRGTSLAYSLLVISFLTPRSSA. Topologically, residues 25–369 are extracellular; that stretch reads GQNCLTKSLE…HGLSFEKWLL (345 aa). Residues 32 to 116 form the MANSC domain; it reads SLEDVVIDIQ…LKPAKGLVTY (85 aa). N-linked (GlcNAc...) asparagine glycosylation is found at N128, N234, and N335. Residues 311 to 339 are disordered; that stretch reads FQGGSTLTSDPRHGKSSTSESSITNKTAS. Residues 326 to 338 are compositionally biased toward polar residues; sequence SSTSESSITNKTA. A helical membrane pass occupies residues 370 to 392; sequence IGTLLCGVLFLVIGLVLLGRMLV. Residues 393-414 are Cytoplasmic-facing; that stretch reads EALRRKRYSRLDYLINGIYVDI.

It is found in the membrane. The protein is MANSC domain-containing protein 1 (Mansc1) of Mus musculus (Mouse).